A 418-amino-acid polypeptide reads, in one-letter code: Mitochondrial outer membrane protein SLC25A46 (418 aa).

Phosphoserine occurs at positions 32 and 35. Threonine 45 carries the post-translational modification Phosphothreonine. The tract at residues 46-96 is disordered; sequence PPDIPGSRNLHWGEKSPSYGVPSAPPTLEGPAEEPFPGGGDGPRPGRSSEQ. The stretch at 96 to 187 is one Solcar 1 repeat; sequence QLNRFAGFGI…GIISEFTPLP (92 aa). 6 helical membrane passes run 103–123, 167–187, 202–222, 258–278, 314–334, and 382–402; these read FGIG…CIVL, FIVQ…TPLP, HLLL…ASLI, LLPL…HYII, FPEL…LYPL, and VFGF…HATI. The stretch at 311-416 is one Solcar 2 repeat; sequence DAYFPELIAN…KIIYSTLLQN (106 aa).

Belongs to the mitochondrial carrier (TC 2.A.29) family. As to quaternary structure, associates with the mitochondrial contact site and cristae organizing system (MICOS) complex. May associate with the endoplasmic reticulum membrane protein complex (EMC). Widely expressed. Highly expressed in hindbrain, spinal cord and brain coronal sections containing corpus callosum, fornix, optic chiasm, thalamus, hypothalamus, midbrain, pons and cerebellum.

Its subcellular location is the mitochondrion outer membrane. Its function is as follows. Transmembrane protein of the mitochondrial outer membrane that controls mitochondrial organization. May regulate the assembly of the MICOS (mitochondrial contact site and cristae organizing system) complex which is essential to the biogenesis and dynamics of mitochondrial cristae, the inwards folds of the inner mitochondrial membrane. Through its interaction with the EMC (endoplasmic reticulum membrane protein complex), could regulate mitochondrial lipid homeostasis and thereby mitochondrial fission. This Rattus norvegicus (Rat) protein is Mitochondrial outer membrane protein SLC25A46.